Consider the following 1396-residue polypeptide: DNA-directed RNA polymerase subunit beta' (1396 aa).

Residues Cys72, Cys74, Cys87, and Cys90 each coordinate Zn(2+). Positions 463, 465, and 467 each coordinate Mg(2+). Residues Cys814, Cys889, Cys896, and Cys899 each coordinate Zn(2+).

The protein belongs to the RNA polymerase beta' chain family. As to quaternary structure, the RNAP catalytic core consists of 2 alpha, 1 beta, 1 beta' and 1 omega subunit. When a sigma factor is associated with the core the holoenzyme is formed, which can initiate transcription. Mg(2+) serves as cofactor. It depends on Zn(2+) as a cofactor.

It catalyses the reaction RNA(n) + a ribonucleoside 5'-triphosphate = RNA(n+1) + diphosphate. Its function is as follows. DNA-dependent RNA polymerase catalyzes the transcription of DNA into RNA using the four ribonucleoside triphosphates as substrates. The polypeptide is DNA-directed RNA polymerase subunit beta' (Chlamydia muridarum (strain MoPn / Nigg)).